Here is a 223-residue protein sequence, read N- to C-terminus: Thylakoid lumenal 15.0 kDa protein 2, chloroplastic (223 aa).

It is found in the plastid. The protein resides in the chloroplast thylakoid lumen. The protein is Thylakoid lumenal 15.0 kDa protein 2, chloroplastic of Arabidopsis thaliana (Mouse-ear cress).